A 520-amino-acid chain; its full sequence is GMP synthase [glutamine-hydrolyzing] (520 aa).

The 193-residue stretch at 13 to 205 folds into the Glutamine amidotransferase type-1 domain; that stretch reads KIIVLDYGSQ…ALNICKAKGD (193 aa). Cys-90 (nucleophile) is an active-site residue. Residues His-179 and Glu-181 contribute to the active site. One can recognise a GMPS ATP-PPase domain in the interval 206 to 395; it reads WSMDNFIDMQ…LGMPDHIVWR (190 aa). 233–239 provides a ligand contact to ATP; that stretch reads SGGVDSS.

As to quaternary structure, homodimer.

The catalysed reaction is XMP + L-glutamine + ATP + H2O = GMP + L-glutamate + AMP + diphosphate + 2 H(+). It participates in purine metabolism; GMP biosynthesis; GMP from XMP (L-Gln route): step 1/1. Catalyzes the synthesis of GMP from XMP. This chain is GMP synthase [glutamine-hydrolyzing], found in Streptococcus pneumoniae (strain P1031).